A 396-amino-acid polypeptide reads, in one-letter code: Inositol hexakisphosphate kinase 3 (396 aa).

Residue 206–214 coordinates substrate; sequence PCILDLKMG.

It belongs to the inositol phosphokinase (IPK) family. Highly expressed in cerebellum, brain cortex, kidney, thymus and lung. Detected at lower levels in hippocampus, testis, heart and olfactory bulb.

It localises to the cytoplasm. The catalysed reaction is 1D-myo-inositol hexakisphosphate + ATP = 5-diphospho-1D-myo-inositol 1,2,3,4,6-pentakisphosphate + ADP. It carries out the reaction 1-diphospho-1D-myo-inositol 2,3,4,5,6-pentakisphosphate + ATP + H(+) = 1,5-bis(diphospho)-1D-myo-inositol 2,3,4,6-tetrakisphosphate + ADP. Its function is as follows. Converts inositol hexakisphosphate (InsP6) to diphosphoinositol pentakisphosphate (InsP7/PP-InsP5). Converts 1,3,4,5,6-pentakisphosphate (InsP5) to PP-InsP4. This is Inositol hexakisphosphate kinase 3 (Ip6k3) from Mus musculus (Mouse).